The sequence spans 99 residues: Small ribosomal subunit protein bS20 (99 aa).

The protein belongs to the bacterial ribosomal protein bS20 family.

In terms of biological role, binds directly to 16S ribosomal RNA. This is Small ribosomal subunit protein bS20 from Thermotoga neapolitana (strain ATCC 49049 / DSM 4359 / NBRC 107923 / NS-E).